Consider the following 298-residue polypeptide: Peroxisomal 2,4-dienoyl-CoA reductase [(3E)-enoyl-CoA-producing] (298 aa).

19-24 (GGGSGI) contributes to the NADP(+) binding site. Arg-44 lines the substrate pocket. Position 69 (Asp-69) interacts with NADP(+). Substrate is bound by residues Arg-71, Phe-101, and 109–111 (SPN). NADP(+)-binding positions include Lys-173 and 200-206 (PGPIGGT). The interval 279-298 (SRAVEKRSRAKPVGLPTSKL) is disordered. Positions 296–298 (SKL) match the Microbody targeting signal motif.

The protein belongs to the short-chain dehydrogenases/reductases (SDR) family. 2,4-dienoyl-CoA reductase subfamily.

Its subcellular location is the peroxisome. The catalysed reaction is a (2E,4Z)-dienoyl-CoA + NADPH + H(+) = a 4,5-saturated-(3E)-enoyl-CoA + NADP(+). The enzyme catalyses a (2E,4E)-dienoyl-CoA + NADPH + H(+) = a 4,5-saturated-(3E)-enoyl-CoA + NADP(+). Auxiliary enzyme of beta-oxidation. Participates in the degradation of unsaturated fatty enoyl-CoA esters having double bonds in both even- and odd-numbered positions in peroxisome. Catalyzes the NADP-dependent reduction of 2,4-dienoyl-CoA to yield trans-3-enoyl-CoA. The sequence is that of Peroxisomal 2,4-dienoyl-CoA reductase [(3E)-enoyl-CoA-producing] from Arabidopsis thaliana (Mouse-ear cress).